We begin with the raw amino-acid sequence, 154 residues long: Small ribosomal subunit protein uS7 (154 aa).

Belongs to the universal ribosomal protein uS7 family.

This chain is Small ribosomal subunit protein uS7 (RPS5), found in Nicotiana plumbaginifolia (Leadwort-leaved tobacco).